Here is a 344-residue protein sequence, read N- to C-terminus: Phosphoribosylformylglycinamidine cyclo-ligase (344 aa).

The protein belongs to the AIR synthase family.

It localises to the cytoplasm. It carries out the reaction 2-formamido-N(1)-(5-O-phospho-beta-D-ribosyl)acetamidine + ATP = 5-amino-1-(5-phospho-beta-D-ribosyl)imidazole + ADP + phosphate + H(+). It functions in the pathway purine metabolism; IMP biosynthesis via de novo pathway; 5-amino-1-(5-phospho-D-ribosyl)imidazole from N(2)-formyl-N(1)-(5-phospho-D-ribosyl)glycinamide: step 2/2. The sequence is that of Phosphoribosylformylglycinamidine cyclo-ligase from Neisseria meningitidis serogroup B (strain ATCC BAA-335 / MC58).